Consider the following 68-residue polypeptide: UPF0253 protein ASA_2184 (68 aa).

This sequence belongs to the UPF0253 family.

The protein is UPF0253 protein ASA_2184 of Aeromonas salmonicida (strain A449).